A 352-amino-acid chain; its full sequence is Probable protein phosphatase 2C 42 (352 aa).

The PPM-type phosphatase domain occupies A26 to F321. 4 residues coordinate Mn(2+): D62, G63, D267, and D312. The disordered stretch occupies residues R328–L352. Over residues G329–T341 the composition is skewed to low complexity.

It belongs to the PP2C family. It depends on Mg(2+) as a cofactor. Mn(2+) is required as a cofactor.

It carries out the reaction O-phospho-L-seryl-[protein] + H2O = L-seryl-[protein] + phosphate. The enzyme catalyses O-phospho-L-threonyl-[protein] + H2O = L-threonyl-[protein] + phosphate. The protein is Probable protein phosphatase 2C 42 of Oryza sativa subsp. japonica (Rice).